A 366-amino-acid chain; its full sequence is Chorismate synthase (366 aa).

NADP(+) is bound by residues R48 and R54. Residues 125 to 127 (RSS), 238 to 239 (NA), G278, 293 to 297 (KPTSS), and R319 each bind FMN.

This sequence belongs to the chorismate synthase family. Homotetramer. The cofactor is FMNH2.

The enzyme catalyses 5-O-(1-carboxyvinyl)-3-phosphoshikimate = chorismate + phosphate. It participates in metabolic intermediate biosynthesis; chorismate biosynthesis; chorismate from D-erythrose 4-phosphate and phosphoenolpyruvate: step 7/7. In terms of biological role, catalyzes the anti-1,4-elimination of the C-3 phosphate and the C-6 proR hydrogen from 5-enolpyruvylshikimate-3-phosphate (EPSP) to yield chorismate, which is the branch point compound that serves as the starting substrate for the three terminal pathways of aromatic amino acid biosynthesis. This reaction introduces a second double bond into the aromatic ring system. The sequence is that of Chorismate synthase from Burkholderia orbicola (strain MC0-3).